A 365-amino-acid chain; its full sequence is Chorismate synthase (365 aa).

Residue arginine 47 coordinates NADP(+). FMN is bound by residues arginine 124–serine 126, glycine 287, lysine 302–threonine 306, and arginine 328.

This sequence belongs to the chorismate synthase family. Homotetramer. FMNH2 serves as cofactor.

It catalyses the reaction 5-O-(1-carboxyvinyl)-3-phosphoshikimate = chorismate + phosphate. It participates in metabolic intermediate biosynthesis; chorismate biosynthesis; chorismate from D-erythrose 4-phosphate and phosphoenolpyruvate: step 7/7. Functionally, catalyzes the anti-1,4-elimination of the C-3 phosphate and the C-6 proR hydrogen from 5-enolpyruvylshikimate-3-phosphate (EPSP) to yield chorismate, which is the branch point compound that serves as the starting substrate for the three terminal pathways of aromatic amino acid biosynthesis. This reaction introduces a second double bond into the aromatic ring system. This Prochlorococcus marinus (strain MIT 9215) protein is Chorismate synthase.